Consider the following 581-residue polypeptide: Adenine deaminase (581 aa).

The protein belongs to the metallo-dependent hydrolases superfamily. Adenine deaminase family. The cofactor is Mn(2+).

It carries out the reaction adenine + H2O + H(+) = hypoxanthine + NH4(+). The polypeptide is Adenine deaminase (Lysinibacillus sphaericus (strain C3-41)).